The chain runs to 361 residues: Phospho-N-acetylmuramoyl-pentapeptide-transferase (361 aa).

The next 10 membrane-spanning stretches (helical) occupy residues 21-41, 69-89, 93-113, 131-151, 168-188, 200-220, 240-260, 264-284, 289-309, and 338-358; these read YLTI…LMLG, VGTP…SILI, WSNI…AIGF, SIKF…IILI, IILP…IVGS, GLAI…AYFS, LFII…FNAY, IFMG…IAIL, ILLF…IIQV, and KIIV…LASI.

This sequence belongs to the glycosyltransferase 4 family. MraY subfamily. Mg(2+) is required as a cofactor.

The protein resides in the cell inner membrane. It catalyses the reaction UDP-N-acetyl-alpha-D-muramoyl-L-alanyl-gamma-D-glutamyl-meso-2,6-diaminopimeloyl-D-alanyl-D-alanine + di-trans,octa-cis-undecaprenyl phosphate = di-trans,octa-cis-undecaprenyl diphospho-N-acetyl-alpha-D-muramoyl-L-alanyl-D-glutamyl-meso-2,6-diaminopimeloyl-D-alanyl-D-alanine + UMP. Its pathway is cell wall biogenesis; peptidoglycan biosynthesis. In terms of biological role, catalyzes the initial step of the lipid cycle reactions in the biosynthesis of the cell wall peptidoglycan: transfers peptidoglycan precursor phospho-MurNAc-pentapeptide from UDP-MurNAc-pentapeptide onto the lipid carrier undecaprenyl phosphate, yielding undecaprenyl-pyrophosphoryl-MurNAc-pentapeptide, known as lipid I. In Vesicomyosocius okutanii subsp. Calyptogena okutanii (strain HA), this protein is Phospho-N-acetylmuramoyl-pentapeptide-transferase.